The sequence spans 199 residues: 7-methyl-GTP pyrophosphatase (199 aa).

Catalysis depends on D73, which acts as the Proton acceptor.

This sequence belongs to the Maf family. YceF subfamily. It depends on a divalent metal cation as a cofactor.

It is found in the cytoplasm. The enzyme catalyses N(7)-methyl-GTP + H2O = N(7)-methyl-GMP + diphosphate + H(+). Its function is as follows. Nucleoside triphosphate pyrophosphatase that hydrolyzes 7-methyl-GTP (m(7)GTP). May have a dual role in cell division arrest and in preventing the incorporation of modified nucleotides into cellular nucleic acids. In Bordetella pertussis (strain Tohama I / ATCC BAA-589 / NCTC 13251), this protein is 7-methyl-GTP pyrophosphatase.